The following is a 182-amino-acid chain: Receptor activity-modifying protein 2 (182 aa).

The N-terminal stretch at 1-45 (MAPLRVERAPGGSQLAVTSAQRPAALRLPPLLLLLLLLLLGAVST) is a signal peptide. The Extracellular portion of the chain corresponds to 46-150 (SPESLNQSHP…VQPTFSDPPE (105 aa)). N-linked (GlcNAc...) asparagine glycosylation is found at N51, N92, and N137. Disulfide bonds link C76/C106 and C91/C138. A helical membrane pass occupies residues 151 to 172 (DVLLAMIIAPICLIPFLVTLVV). At 173–182 (WRSKDGDAQA) the chain is on the cytoplasmic side.

This sequence belongs to the RAMP family. In terms of assembly, heterodimer of CALCRL and RAMP2; the interaction forms the receptor complex for adrenomedullin/ADM. Heterodimer of CALCR and RAMP2; interaction forms the AMYR2 receptor complex for calcitonin/CALC and amylin/IAPP.

It is found in the cell membrane. Its function is as follows. Accessory protein that interacts with and modulates the function of G-protein coupled receptors including calcitonin gene-related peptide type 1 receptor (CALCRL) and calcitonin receptor (CALCR). Required for the transport of CALCRL to the plasma membrane. Together with CALCRL, form a receptor complex for adrenomedullin/ADM. Together with CALCR, act as a receptor complex for calcitonin/CT/CALC. Together with CALCR, also act as a receptor complex for amylin/IAPP. In Rattus norvegicus (Rat), this protein is Receptor activity-modifying protein 2.